Consider the following 281-residue polypeptide: Phosphatidylserine decarboxylase proenzyme (281 aa).

Catalysis depends on charge relay system; for autoendoproteolytic cleavage activity residues D90, H143, and S248. S248 functions as the Schiff-base intermediate with substrate; via pyruvic acid; for decarboxylase activity in the catalytic mechanism. S248 is modified (pyruvic acid (Ser); by autocatalysis).

It belongs to the phosphatidylserine decarboxylase family. PSD-B subfamily. Prokaryotic type I sub-subfamily. In terms of assembly, heterodimer of a large membrane-associated beta subunit and a small pyruvoyl-containing alpha subunit. Pyruvate serves as cofactor. In terms of processing, is synthesized initially as an inactive proenzyme. Formation of the active enzyme involves a self-maturation process in which the active site pyruvoyl group is generated from an internal serine residue via an autocatalytic post-translational modification. Two non-identical subunits are generated from the proenzyme in this reaction, and the pyruvate is formed at the N-terminus of the alpha chain, which is derived from the carboxyl end of the proenzyme. The autoendoproteolytic cleavage occurs by a canonical serine protease mechanism, in which the side chain hydroxyl group of the serine supplies its oxygen atom to form the C-terminus of the beta chain, while the remainder of the serine residue undergoes an oxidative deamination to produce ammonia and the pyruvoyl prosthetic group on the alpha chain. During this reaction, the Ser that is part of the protease active site of the proenzyme becomes the pyruvoyl prosthetic group, which constitutes an essential element of the active site of the mature decarboxylase.

The protein localises to the cell membrane. It catalyses the reaction a 1,2-diacyl-sn-glycero-3-phospho-L-serine + H(+) = a 1,2-diacyl-sn-glycero-3-phosphoethanolamine + CO2. Its pathway is phospholipid metabolism; phosphatidylethanolamine biosynthesis; phosphatidylethanolamine from CDP-diacylglycerol: step 2/2. In terms of biological role, catalyzes the formation of phosphatidylethanolamine (PtdEtn) from phosphatidylserine (PtdSer). This is Phosphatidylserine decarboxylase proenzyme from Francisella philomiragia subsp. philomiragia (strain ATCC 25017 / CCUG 19701 / FSC 153 / O#319-036).